The primary structure comprises 248 residues: Proteasome subunit alpha type-5 (248 aa).

This sequence belongs to the peptidase T1A family. In terms of assembly, the 26S proteasome consists of a 20S proteasome core and two 19S regulatory subunits. The 20S proteasome core is composed of 28 subunits that are arranged in four stacked rings, resulting in a barrel-shaped structure. The two end rings are each formed by seven alpha subunits, and the two central rings are each formed by seven beta subunits. The catalytic chamber with the active sites is on the inside of the barrel.

The protein localises to the cytoplasm. It is found in the nucleus. Its function is as follows. The proteasome is a multicatalytic proteinase complex which is characterized by its ability to cleave peptides with Arg, Phe, Tyr, Leu, and Glu adjacent to the leaving group at neutral or slightly basic pH. The proteasome has an ATP-dependent proteolytic activity. The protein is Proteasome subunit alpha type-5 (pas-5) of Caenorhabditis elegans.